The primary structure comprises 124 residues: Fluoride-specific ion channel FluC (124 aa).

The next 4 helical transmembrane spans lie at 4-24 (ILAI…LAGG), 32-52 (AFPW…GLIM), 68-88 (GLTI…YETF), and 101-121 (LNVL…IMAA). Na(+) contacts are provided by Gly75 and Thr78.

The protein belongs to the fluoride channel Fluc/FEX (TC 1.A.43) family.

Its subcellular location is the cell inner membrane. The enzyme catalyses fluoride(in) = fluoride(out). With respect to regulation, na(+) is not transported, but it plays an essential structural role and its presence is essential for fluoride channel function. Functionally, fluoride-specific ion channel. Important for reducing fluoride concentration in the cell, thus reducing its toxicity. The chain is Fluoride-specific ion channel FluC from Geobacter sulfurreducens (strain ATCC 51573 / DSM 12127 / PCA).